Consider the following 105-residue polypeptide: Thioredoxin (105 aa).

The 105-residue stretch at 1–105 (MANNVMDSSF…SLLDWINKSI (105 aa)) folds into the Thioredoxin domain. Cysteines 30 and 33 form a disulfide.

The protein belongs to the thioredoxin family.

In terms of biological role, component of the thioredoxin-thioredoxin reductase system. Participates in various redox reactions through the reversible oxidation of its active center dithiol to a disulfide and catalyzes dithiol-disulfide exchange reactions. This is Thioredoxin (trxA) from Rickettsia conorii (strain ATCC VR-613 / Malish 7).